The sequence spans 218 residues: Ras-related protein R-Ras (218 aa).

Residues 1–30 (MSSGAASGTGRGRPRGGGPGPGDPPPSETH) form a disordered region. A compositionally biased stretch (gly residues) spans 7–20 (SGTGRGRPRGGGPG). 36-44 (GGGGVGKSA) contacts GTP. Positions 58–66 (YDPTIEDSY) match the Effector region motif. GTP-binding positions include 83–87 (DTAGQ), 142–145 (NKAD), and 172–174 (SAK). Residue Cys-215 is modified to Cysteine methyl ester. Cys-215 carries S-geranylgeranyl cysteine lipidation. A propeptide spans 216 to 218 (VLL) (removed in mature form).

The protein belongs to the small GTPase superfamily. Ras family. In terms of assembly, interacts with PLCE1. Interacts (active GTP-bound form preferentially) with RGS14. Interacts with OSBPL3. Interacts with ZDHHC19. S-palmitoylated by ZDHHC19, leading to increased association with membranes and with rafts/caveolae as well as enhanced cell viability.

It is found in the cell membrane. The catalysed reaction is GTP + H2O = GDP + phosphate + H(+). GTP-binding protein with GTPase activity, likely involved in the regulation of MAPK signaling pathway and thereby controlling multiple cellular processes. Regulates the organization of the actin cytoskeleton. With OSPBL3, modulates integrin beta-1 (ITGB1) activity. The polypeptide is Ras-related protein R-Ras (RRAS) (Homo sapiens (Human)).